A 464-amino-acid polypeptide reads, in one-letter code: Molybdate transporter 2 (464 aa).

A Tonoplast targeting signal motif is present at residues 8–9 (LL). 9 helical membrane-spanning segments follow: residues 33–53 (LSGA…LTLV), 62–82 (LIFT…PMPV), 116–136 (LLLG…LPVV), 172–192 (IWLG…IILS), 223–243 (LLSS…LCFI), 309–329 (VSIS…MPVC), 348–368 (SVIF…NSFV), 374–394 (FPIG…AMAS), and 404–424 (FIML…LGFG).

This sequence belongs to the SLC26A/SulP transporter (TC 2.A.53) family. Expressed in leaves. Not detected in roots, shoots and seeds.

Its subcellular location is the vacuole membrane. In terms of biological role, molybdate transporter required for vacuolar molybdate export during senescence. This is Molybdate transporter 2 (MOT2) from Arabidopsis thaliana (Mouse-ear cress).